Consider the following 522-residue polypeptide: MRTAFELVAWSAHRQPGAVALLDPESGHRLTYSELLKRIEGVATVLASRGVVRDELVATAMANTLDHAIILLALNRLGAIPVIINPRLKADEMVQLIRRDNIRTVIRTVAEGKSGTPADIDGVEELTLSAEVLSEGLRIDGNATPAFEAPRPEDPAFVFYTSGTTGLPKGVVIPHRAIEPRVLFMSTQAGLRFGGHNNLLGLMPIHHVIGFFGVFLGSLAFNGTWIPVTAFDPAQAVKWVEELDVTCLFASPTHFDALLATSEFAPEKLKSVDSVIFAGAAINQSILKRLEKCLQVPIVDIYGTTETMNSLFNPDATQERGLRPGYHSRVQFASVSESPSVALPAGVEGELVVDASADATFTHYLNNPEATAAKIVDGWYRTGDSGYVDDSGRVILTGRIDDMINTGAENVHAEEVEQIISRHPAVVEAAVVGLPDTRWGEVVTAVVVVSEPLTADLLDQVCLDSELANFKRPRRYFVVNELPRNAAMKVSRRTLREYLGAHAADQPNPETGFIQFTIEESQ.

ATP-binding positions include 161 to 169 (TSGTTGLPK), 300 to 305 (DIYGTT), and Asn-410.

It belongs to the ATP-dependent AMP-binding enzyme family. As to quaternary structure, homodimer. Mg(2+) is required as a cofactor.

It catalyses the reaction 4-chlorobenzoate + ATP + CoA = 4-chlorobenzoyl-CoA + AMP + diphosphate. It participates in xenobiotic degradation; 4-chlorobenzoate degradation; 4-hydroxybenzoate from 4-chlorobenzoate: step 2/3. Catalyzes the formation of chlorobenzoyl-CoA via a 2 step reaction. First 4-chlorobenzoate is adenylated by ATP, followed by acyl transfer from the 4-chlorobenzoyl-AMP intermediate to CoA. Benzoate, 4-bromobenzoate, 4-iodobenzoate and 4-fluorobenzoate also act as substrates. Inactive towards 4-nitrobenzoate. The chain is 4-chlorobenzoate--CoA ligase from Arthrobacter sp.